A 467-amino-acid chain; its full sequence is ATP-dependent protease ATPase subunit HslU (467 aa).

ATP contacts are provided by residues Val22 and 64-69 (GVGKTE). The disordered stretch occupies residues 166 to 185 (GQNQDEEEEPPTEEIKTKRS). ATP-binding residues include Asp280, Glu345, and Arg417.

It belongs to the ClpX chaperone family. HslU subfamily. In terms of assembly, a double ring-shaped homohexamer of HslV is capped on each side by a ring-shaped HslU homohexamer. The assembly of the HslU/HslV complex is dependent on binding of ATP.

It is found in the cytoplasm. In terms of biological role, ATPase subunit of a proteasome-like degradation complex; this subunit has chaperone activity. The binding of ATP and its subsequent hydrolysis by HslU are essential for unfolding of protein substrates subsequently hydrolyzed by HslV. HslU recognizes the N-terminal part of its protein substrates and unfolds these before they are guided to HslV for hydrolysis. This Staphylococcus epidermidis (strain ATCC 35984 / DSM 28319 / BCRC 17069 / CCUG 31568 / BM 3577 / RP62A) protein is ATP-dependent protease ATPase subunit HslU.